The chain runs to 240 residues: Ribonuclease PH (240 aa).

Phosphate-binding positions include R87 and 125–127 (GTR).

This sequence belongs to the RNase PH family. As to quaternary structure, homohexameric ring arranged as a trimer of dimers.

It carries out the reaction tRNA(n+1) + phosphate = tRNA(n) + a ribonucleoside 5'-diphosphate. In terms of biological role, phosphorolytic 3'-5' exoribonuclease that plays an important role in tRNA 3'-end maturation. Removes nucleotide residues following the 3'-CCA terminus of tRNAs; can also add nucleotides to the ends of RNA molecules by using nucleoside diphosphates as substrates, but this may not be physiologically important. Probably plays a role in initiation of 16S rRNA degradation (leading to ribosome degradation) during starvation. The sequence is that of Ribonuclease PH from Crocosphaera subtropica (strain ATCC 51142 / BH68) (Cyanothece sp. (strain ATCC 51142)).